We begin with the raw amino-acid sequence, 374 residues long: Putative F-box protein At3g17480 (374 aa).

One can recognise an F-box domain in the interval 6–52 (SSPMSVLTEDLVEDILSRVPATSLVRLRSTCKQWNAILNDRRFIKKH).

This is Putative F-box protein At3g17480 from Arabidopsis thaliana (Mouse-ear cress).